A 397-amino-acid polypeptide reads, in one-letter code: Zinc finger transcription factor family protein 30 (397 aa).

Residues Met-1 to Val-40 form a disordered region. Residues Thr-14–Asn-27 show a composition bias toward acidic residues. 3 consecutive C2H2-type zinc fingers follow at residues Phe-51–His-74, Tyr-78–His-102, and Tyr-107–His-125.

The protein localises to the nucleus. In Caenorhabditis elegans, this protein is Zinc finger transcription factor family protein 30 (ztf-30).